A 393-amino-acid polypeptide reads, in one-letter code: Riboflavin biosynthesis protein RibBA (393 aa).

The segment at 1-200 (MQFDTIELAI…IKSLVAFRKA (200 aa)) is DHBP synthase. D-ribulose 5-phosphate contacts are provided by residues 27 to 28 (RE), D32, 139 to 143 (RNGHT), and E163. E28 serves as a coordination point for Mg(2+). H142 serves as a coordination point for Mg(2+). The interval 201–393 (VELNVNLKAK…TKKNKMGHLI (193 aa)) is GTP cyclohydrolase II. 249-253 (RMHSA) serves as a coordination point for GTP. 3 residues coordinate Zn(2+): C254, C265, and C267. GTP-binding positions include Q270, 291–293 (EGR), and T313. The Proton acceptor; for GTP cyclohydrolase activity role is filled by D325. R327 acts as the Nucleophile; for GTP cyclohydrolase activity in catalysis. GTP contacts are provided by S348 and K353.

It in the N-terminal section; belongs to the DHBP synthase family. In the C-terminal section; belongs to the GTP cyclohydrolase II family. Mg(2+) is required as a cofactor. It depends on Mn(2+) as a cofactor. The cofactor is Zn(2+).

It carries out the reaction D-ribulose 5-phosphate = (2S)-2-hydroxy-3-oxobutyl phosphate + formate + H(+). The enzyme catalyses GTP + 4 H2O = 2,5-diamino-6-hydroxy-4-(5-phosphoribosylamino)-pyrimidine + formate + 2 phosphate + 3 H(+). It functions in the pathway cofactor biosynthesis; riboflavin biosynthesis; 2-hydroxy-3-oxobutyl phosphate from D-ribulose 5-phosphate: step 1/1. It participates in cofactor biosynthesis; riboflavin biosynthesis; 5-amino-6-(D-ribitylamino)uracil from GTP: step 1/4. Its function is as follows. Catalyzes the conversion of D-ribulose 5-phosphate to formate and 3,4-dihydroxy-2-butanone 4-phosphate. Functionally, catalyzes the conversion of GTP to 2,5-diamino-6-ribosylamino-4(3H)-pyrimidinone 5'-phosphate (DARP), formate and pyrophosphate. The sequence is that of Riboflavin biosynthesis protein RibBA from Staphylococcus epidermidis (strain ATCC 12228 / FDA PCI 1200).